The chain runs to 106 residues: Nucleoid-associated protein RPD_0086 (106 aa).

This sequence belongs to the YbaB/EbfC family. In terms of assembly, homodimer.

The protein localises to the cytoplasm. Its subcellular location is the nucleoid. Its function is as follows. Binds to DNA and alters its conformation. May be involved in regulation of gene expression, nucleoid organization and DNA protection. The chain is Nucleoid-associated protein RPD_0086 from Rhodopseudomonas palustris (strain BisB5).